A 150-amino-acid polypeptide reads, in one-letter code: Avidin-related protein 7 (150 aa).

An N-terminal signal peptide occupies residues methionine 1 to serine 24. The Avidin-like domain occupies arginine 26 to threonine 147. A disulfide bridge connects residues cysteine 28 and cysteine 105. Biotin-binding residues include asparagine 36 and serine 40. N-linked (GlcNAc...) asparagine glycans are attached at residues asparagine 41 and asparagine 54. Biotin is bound by residues tyrosine 57, threonine 59, and aspartate 63. An N-linked (GlcNAc...) asparagine glycan is attached at asparagine 93. 3 residues coordinate biotin: serine 95, serine 99, and asparagine 140. Asparagine 141 carries N-linked (GlcNAc...) asparagine glycosylation.

This sequence belongs to the avidin/streptavidin family. In terms of assembly, homotetramer. Glycosylated.

It is found in the secreted. Its function is as follows. Forms a strong non-covalent specific complex with biotin. The chain is Avidin-related protein 7 (AVR7) from Gallus gallus (Chicken).